Here is a 206-residue protein sequence, read N- to C-terminus: Endoplasmic reticulum transmembrane protein 1 (206 aa).

Residues 1-7 are Lumenal-facing; that stretch reads MSLYFTT. Residues 8 to 28 traverse the membrane as a helical segment; the sequence is LFLLLTVEMVMLFIFVLPLPF. Topologically, residues 29-45 are cytoplasmic; that stretch reads RIRRGIFSTYNQLTAKQ. The helical transmembrane segment at 46-66 threads the bilayer; sequence QIKTIIFITGCLVGLLFIDSW. Residues 67–104 are Lumenal-facing; it reads KRSQIRVSLYHNDNSGSIGSSAVTPIQALASRAYNQRN. Residues 105–125 form a helical membrane-spanning segment; the sequence is MYISGFILYFSICIPTVMSIV. The Cytoplasmic portion of the chain corresponds to 126–206; it reads KRLVKYQGLI…AAAEASKKGN (81 aa). Residues 140–163 are disordered; it reads KQKLNKPSSNSKKDSNEADSTKLQ. Over residues 150 to 163 the composition is skewed to basic and acidic residues; sequence SKKDSNEADSTKLQ. A Glycyl lysine isopeptide (Lys-Gly) (interchain with G-Cter in ubiquitin) cross-link involves residue lysine 190. A Di-lysine motif motif is present at residues 203–206; sequence KKGN.

Belongs to the BCAP29/BCAP31 family.

The protein localises to the endoplasmic reticulum membrane. Its function is as follows. May play a role in anterograde transport of membrane proteins from the endoplasmic reticulum to the Golgi. The polypeptide is Endoplasmic reticulum transmembrane protein 1 (YET1) (Saccharomyces cerevisiae (strain ATCC 204508 / S288c) (Baker's yeast)).